The following is a 136-amino-acid chain: MVTSVLSRGTVSRVSSVLNRDVKQFGKQFLFDGREETCWNSDQGSYQWVLMEFPQNVLVSQIHLQFQGGFSCQTCTLEGCQKDGELVKIADFYPEDTNALQKFAFSEQSVSKLRISFLNSTDFFGRITVYHLDVLG.

It belongs to the NR2C2AP family.

It localises to the nucleus. Its function is as follows. May act as a repressor of nr2c2-mediated transactivation by suppressing the binding between nr2c2 and its response element in target genes. This chain is Nuclear receptor 2C2-associated protein (nr2c2ap), found in Xenopus laevis (African clawed frog).